The primary structure comprises 287 residues: Bifunctional protein FolD (287 aa).

NADP(+) is bound by residues 167 to 169 (GRS) and threonine 192.

This sequence belongs to the tetrahydrofolate dehydrogenase/cyclohydrolase family. Homodimer.

The enzyme catalyses (6R)-5,10-methylene-5,6,7,8-tetrahydrofolate + NADP(+) = (6R)-5,10-methenyltetrahydrofolate + NADPH. It catalyses the reaction (6R)-5,10-methenyltetrahydrofolate + H2O = (6R)-10-formyltetrahydrofolate + H(+). The protein operates within one-carbon metabolism; tetrahydrofolate interconversion. Catalyzes the oxidation of 5,10-methylenetetrahydrofolate to 5,10-methenyltetrahydrofolate and then the hydrolysis of 5,10-methenyltetrahydrofolate to 10-formyltetrahydrofolate. This chain is Bifunctional protein FolD, found in Sorangium cellulosum (strain So ce56) (Polyangium cellulosum (strain So ce56)).